A 75-amino-acid chain; its full sequence is MLILSRKTNQKILIGDDIEITIIDIRGDQVKIGVDAPPSVKVFREEIYQEIQNENRAALVRDTELNLPELHIKKK.

The protein belongs to the CsrA/RsmA family. As to quaternary structure, homodimer; the beta-strands of each monomer intercalate to form a hydrophobic core, while the alpha-helices form wings that extend away from the core.

It localises to the cytoplasm. Its function is as follows. A translational regulator that binds mRNA to regulate translation initiation and/or mRNA stability. Usually binds in the 5'-UTR at or near the Shine-Dalgarno sequence preventing ribosome-binding, thus repressing translation. Its main target seems to be the major flagellin gene, while its function is anatagonized by FliW. The sequence is that of Translational regulator CsrA from Treponema denticola (strain ATCC 35405 / DSM 14222 / CIP 103919 / JCM 8153 / KCTC 15104).